Here is a 198-residue protein sequence, read N- to C-terminus: Recombination protein RecR (198 aa).

A C4-type zinc finger spans residues 58-73 (CKVCQTLTDKEICPIC). The Toprim domain occupies 81–175 (KVIMVVENTR…KVSRIASGVP (95 aa)).

Belongs to the RecR family.

In terms of biological role, may play a role in DNA repair. It seems to be involved in an RecBC-independent recombinational process of DNA repair. It may act with RecF and RecO. The sequence is that of Recombination protein RecR from Lachnoclostridium phytofermentans (strain ATCC 700394 / DSM 18823 / ISDg) (Clostridium phytofermentans).